Consider the following 491-residue polypeptide: Trypanothione reductase (491 aa).

35-51 (DLQKHHGPPHYAALGGT) contacts FAD. Cysteines 52 and 57 form a disulfide. The active-site Proton acceptor is the His-461.

The protein belongs to the class-I pyridine nucleotide-disulfide oxidoreductase family. In terms of assembly, homodimer. It depends on FAD as a cofactor. In terms of processing, the N-terminus is blocked.

It localises to the cytoplasm. It catalyses the reaction trypanothione + NADP(+) = trypanothione disulfide + NADPH + H(+). In terms of biological role, trypanothione is the parasite analog of glutathione; this enzyme is the equivalent of glutathione reductase. The chain is Trypanothione reductase (TPR) from Crithidia fasciculata.